The following is a 439-amino-acid chain: MAGEFYDSARIFVQAGDGGDGAATFRREKYVPRGGPDGGDGGRGGHVYLVADPGLNTLLPFRERTRFIAERGGNGGRSRKHGRNGRDVFIRVPVGTVARTVIDGETYSVDLDAPGLRLLAARGGRGGLGNVHFATSSYQVPRIAELGEPGERREIELELKLLADVGLIGFPNAGKSTLLSVISAARPKIAPYPFTTLQPNLGVVEVGEYSFVVADIPGLIEGAHRGVGLGFSFLRHIERTRLLIHIIDAAGVDGRDPVNDFSAINEELRLYQPALAQRPQVVALNKADLPEAQANLKRLRAAIPVSEQDLFVISAATREGVDALLQRVAERLREMPAPHRAPRDETLTWPVPEVDERLYTIERTGDGWRVRGRRIERLISMTNFAQPDAIMRIQRVLEASGIGAALQEAGIQNGDVLYIEQAAFDWEDGAITYRMPGVS.

Positions 3–162 constitute an Obg domain; the sequence is GEFYDSARIF…REIELELKLL (160 aa). Residues 163–333 enclose the OBG-type G domain; that stretch reads ADVGLIGFPN…LLQRVAERLR (171 aa). GTP-binding positions include 169-176, 194-198, 215-218, 285-288, and 314-316; these read GFPNAGKS, FTTLQ, DIPG, NKAD, and SAA. S176 and T196 together coordinate Mg(2+). An OCT domain is found at 351 to 428; the sequence is VPEVDERLYT…IEQAAFDWED (78 aa).

Belongs to the TRAFAC class OBG-HflX-like GTPase superfamily. OBG GTPase family. As to quaternary structure, monomer. Mg(2+) is required as a cofactor.

Its subcellular location is the cytoplasm. In terms of biological role, an essential GTPase which binds GTP, GDP and possibly (p)ppGpp with moderate affinity, with high nucleotide exchange rates and a fairly low GTP hydrolysis rate. Plays a role in control of the cell cycle, stress response, ribosome biogenesis and in those bacteria that undergo differentiation, in morphogenesis control. The protein is GTPase Obg of Roseiflexus castenholzii (strain DSM 13941 / HLO8).